The sequence spans 353 residues: UDP-galactose transporter (353 aa).

6 helical membrane-spanning segments follow: residues 147–167 (LGPM…IVQL), 184–204 (VTGF…GVYF), 215–235 (LWVR…FTIL), 254–274 (IVWL…LCVA), 279–299 (IMKN…SVYL), and 302–322 (FKIS…TFLY). Residues 325 to 353 (PESKPSPSRGTYIPMTTQDAAAKDVDHKH) form a disordered region. Polar residues predominate over residues 329–343 (PSPSRGTYIPMTTQD).

This sequence belongs to the nucleotide-sugar transporter family. SLC35A subfamily.

Its subcellular location is the golgi apparatus membrane. In terms of biological role, essential for the transport of UDP-galactose into the lumen of Golgi apparatus. In Schizosaccharomyces pombe (strain 972 / ATCC 24843) (Fission yeast), this protein is UDP-galactose transporter (gms1).